The primary structure comprises 216 residues: Nucleoside triphosphate pyrophosphatase (216 aa).

Catalysis depends on D86, which acts as the Proton acceptor.

The protein belongs to the Maf family. A divalent metal cation is required as a cofactor.

It localises to the cytoplasm. It carries out the reaction a ribonucleoside 5'-triphosphate + H2O = a ribonucleoside 5'-phosphate + diphosphate + H(+). It catalyses the reaction a 2'-deoxyribonucleoside 5'-triphosphate + H2O = a 2'-deoxyribonucleoside 5'-phosphate + diphosphate + H(+). Nucleoside triphosphate pyrophosphatase. May have a dual role in cell division arrest and in preventing the incorporation of modified nucleotides into cellular nucleic acids. This Dictyostelium discoideum (Social amoeba) protein is Nucleoside triphosphate pyrophosphatase.